The chain runs to 604 residues: NADPH oxidase activator (604 aa).

2 TPR repeats span residues 36-69 (SKIN…DKYL) and 71-103 (SSYY…LRGH). 2 disordered regions span residues 180–298 (FKPP…KLPS) and 383–581 (DIIP…PYQV). 2 stretches are compositionally biased toward low complexity: residues 194-215 (SATT…SPPS) and 225-243 (PSSS…SSSP). Residues 244–260 (KLPPTPKPSFGSSPPPS) are compositionally biased toward pro residues. Positions 261–284 (SSSSSSSSSSSSSSSISPLTNKTL) are enriched in low complexity. Residues 309–384 (KITLKVFYKD…EINEINVKDI (76 aa)) form the PB1 domain. Low complexity-rich tracts occupy residues 396–424 (PDKT…SSSS), 435–453 (PKTT…TTST), and 467–483 (FGST…SSSS). A compositionally biased stretch (polar residues) spans 502-528 (LLKQQNQTQSINIPPKVPTSSRPKMTQ). Low complexity predominate over residues 529–570 (SHSPPSSSPLSSYSTSFQSVSSPSLSSSYNGSTSSYGGFSSS). The WW domain occupies 573–604 (PPTPYPYQVLYTDSNEKYYLNTETNETFWELP).

Functionally, may function as an activator of NOX1, a superoxide-producing NADPH oxidase. The chain is NADPH oxidase activator (ncfA) from Dictyostelium discoideum (Social amoeba).